A 380-amino-acid chain; its full sequence is MSTYIQVNIYNQTLEVLKMRGLDLQSILKTIGCPDSWVTEVPIHPPAQKIQKPATPPTSCAPQLVSSPKCLESISAQSQNVLKKPFKSISAELGFAQPLNLVDTLGLKPRDSDAMSRGKRPASVLKGLFDDWDPTANLDIPGTSSDIPSDPSSALKVPKKEVLDESEEILDQTSGSSSFSLNDSEQANEQERNIIEDLLRQQMFTESKIKNEEASLLKGLKKGLGEELESSHANYVITCNFPGCGLKYNWRVKYGKLRLLDHALTHSNRKIPCKLCGFECTNVRRMRSHYAKAHPNERVEGYGMKALVSGDSSRIGDGVDGDIDQQVSDDELKELWNNCFSESIHLVGQASGFVEGEKYRRMTKRRKLDREAMNSMNFMF.

The tract at residues 137-187 (NLDIPGTSSDIPSDPSSALKVPKKEVLDESEEILDQTSGSSSFSLNDSEQA) is disordered. Composition is skewed to polar residues over residues 142 to 152 (GTSSDIPSDPS) and 171 to 187 (DQTS…SEQA). Residues 271–294 (IPCKLCGFECTNVRRMRSHYAKAH) form a C2H2-type zinc finger.

The protein localises to the nucleus. The polypeptide is Putative zinc finger protein C02F5.12 (Caenorhabditis elegans).